Reading from the N-terminus, the 271-residue chain is 3-deoxy-manno-octulosonate cytidylyltransferase (271 aa).

Belongs to the KdsB family.

The protein resides in the cytoplasm. The enzyme catalyses 3-deoxy-alpha-D-manno-oct-2-ulosonate + CTP = CMP-3-deoxy-beta-D-manno-octulosonate + diphosphate. It participates in nucleotide-sugar biosynthesis; CMP-3-deoxy-D-manno-octulosonate biosynthesis; CMP-3-deoxy-D-manno-octulosonate from 3-deoxy-D-manno-octulosonate and CTP: step 1/1. The protein operates within bacterial outer membrane biogenesis; lipopolysaccharide biosynthesis. Its function is as follows. Activates KDO (a required 8-carbon sugar) for incorporation into bacterial lipopolysaccharide in Gram-negative bacteria. This is 3-deoxy-manno-octulosonate cytidylyltransferase from Leptothrix cholodnii (strain ATCC 51168 / LMG 8142 / SP-6) (Leptothrix discophora (strain SP-6)).